The chain runs to 259 residues: Probable ABC transporter permease protein RP096 (259 aa).

The next 5 helical transmembrane spans lie at 13 to 35, 49 to 69, 148 to 168, 195 to 215, and 237 to 257; these read TIKF…SSII, LFIG…SGAV, VIAA…IGVM, PIDV…ISII, and AVVN…ELFF.

Belongs to the MlaE permease family.

The protein localises to the cell inner membrane. In terms of biological role, could be part of an ABC transporter complex. The chain is Probable ABC transporter permease protein RP096 from Rickettsia prowazekii (strain Madrid E).